The following is a 323-amino-acid chain: MIDFGKFYQQIACGPLAHWLETLPAQVAAWQRDALHGQFKQWKNSLDNLPALVPDQLDLLHSVSAQSAEPLSDGQRKRIEQLLRTLMPWRKGPFSLYGIDIDTEWRSDLKWDRVLPHITPLAGRTILDVGCGSGYHLWRMVGAGAQLAVGIDPTQLFLCQFEAVRKLLGGDNRAHVLPLGIEQMPALNAFDTVFSMGVLYHRRSPLDHLWQLKDQLVKDGELVLETLVVEGDENTVLVPGERYAQMRNVYFIPSAAALKNWLEKCGFVDVKIADFSVTTVEEQRRTAWMETESLADFLDPHDATKTREGYPAPLRAVLVARKP.

Carboxy-S-adenosyl-L-methionine contacts are provided by residues Lys-91, Trp-105, Lys-110, Gly-130, 152-154 (DPT), 181-182 (IE), Met-196, Tyr-200, and Arg-315.

The protein belongs to the class I-like SAM-binding methyltransferase superfamily. CmoB family. In terms of assembly, homotetramer.

The enzyme catalyses carboxy-S-adenosyl-L-methionine + 5-hydroxyuridine(34) in tRNA = 5-carboxymethoxyuridine(34) in tRNA + S-adenosyl-L-homocysteine + H(+). Its function is as follows. Catalyzes carboxymethyl transfer from carboxy-S-adenosyl-L-methionine (Cx-SAM) to 5-hydroxyuridine (ho5U) to form 5-carboxymethoxyuridine (cmo5U) at position 34 in tRNAs. This is tRNA U34 carboxymethyltransferase from Cronobacter sakazakii (strain ATCC BAA-894) (Enterobacter sakazakii).